Reading from the N-terminus, the 133-residue chain is ATP synthase epsilon chain, chloroplastic (133 aa).

The protein belongs to the ATPase epsilon chain family. In terms of assembly, F-type ATPases have 2 components, CF(1) - the catalytic core - and CF(0) - the membrane proton channel. CF(1) has five subunits: alpha(3), beta(3), gamma(1), delta(1), epsilon(1). CF(0) has three main subunits: a, b and c.

It localises to the plastid. The protein resides in the chloroplast thylakoid membrane. Functionally, produces ATP from ADP in the presence of a proton gradient across the membrane. The protein is ATP synthase epsilon chain, chloroplastic of Nicotiana sylvestris (Wood tobacco).